The primary structure comprises 139 residues: Probable disulfide formation protein C 2 (139 aa).

The helical transmembrane segment at Lys6–Phe25 threads the bilayer. The cysteines at positions 35 and 38 are disulfide-linked. Helical transmembrane passes span Tyr40–Lys59 and Tyr66–Thr83. Residues Cys95 and Cys101 are joined by a disulfide bond. The chain crosses the membrane as a helical span at residues Gly110 to Ser133.

This sequence belongs to the DsbB family. BdbC subfamily.

Its subcellular location is the cell membrane. Functionally, required for disulfide bond formation in some proteins. This chain is Probable disulfide formation protein C 2 (bdbC2), found in Bacillus cereus (strain ATCC 10987 / NRS 248).